The primary structure comprises 251 residues: Ditrans,polycis-undecaprenyl-diphosphate synthase ((2E,6E)-farnesyl-diphosphate specific) (251 aa).

D20 is a catalytic residue. A Mg(2+)-binding site is contributed by D20. Substrate contacts are provided by residues 21 to 24, W25, R33, H37, and 65 to 67; these read GNGR and SSE. N68 (proton acceptor) is an active-site residue. Substrate-binding positions include W69, R71, R188, and 194 to 196; that span reads RIS. E207 is a Mg(2+) binding site.

It belongs to the UPP synthase family. Homodimer. The cofactor is Mg(2+).

The enzyme catalyses 8 isopentenyl diphosphate + (2E,6E)-farnesyl diphosphate = di-trans,octa-cis-undecaprenyl diphosphate + 8 diphosphate. Catalyzes the sequential condensation of isopentenyl diphosphate (IPP) with (2E,6E)-farnesyl diphosphate (E,E-FPP) to yield (2Z,6Z,10Z,14Z,18Z,22Z,26Z,30Z,34E,38E)-undecaprenyl diphosphate (di-trans,octa-cis-UPP). UPP is the precursor of glycosyl carrier lipid in the biosynthesis of bacterial cell wall polysaccharide components such as peptidoglycan and lipopolysaccharide. The polypeptide is Ditrans,polycis-undecaprenyl-diphosphate synthase ((2E,6E)-farnesyl-diphosphate specific) (Vibrio vulnificus (strain CMCP6)).